The chain runs to 65 residues: Large ribosomal subunit protein bL31 (65 aa).

4 residues coordinate Zn(2+): cysteine 16, cysteine 18, cysteine 36, and cysteine 39.

Belongs to the bacterial ribosomal protein bL31 family. Type A subfamily. Part of the 50S ribosomal subunit. It depends on Zn(2+) as a cofactor.

In terms of biological role, binds the 23S rRNA. This is Large ribosomal subunit protein bL31 from Campylobacter jejuni subsp. doylei (strain ATCC BAA-1458 / RM4099 / 269.97).